The sequence spans 879 residues: Alanine--tRNA ligase (879 aa).

Residues 426 to 449 (KQKERARNARGNMDGESWKEDPLS) are disordered. Zn(2+) is bound by residues histidine 566, histidine 570, cysteine 668, and histidine 672.

This sequence belongs to the class-II aminoacyl-tRNA synthetase family. Requires Zn(2+) as cofactor.

Its subcellular location is the cytoplasm. The catalysed reaction is tRNA(Ala) + L-alanine + ATP = L-alanyl-tRNA(Ala) + AMP + diphosphate. Its function is as follows. Catalyzes the attachment of alanine to tRNA(Ala) in a two-step reaction: alanine is first activated by ATP to form Ala-AMP and then transferred to the acceptor end of tRNA(Ala). Also edits incorrectly charged Ser-tRNA(Ala) and Gly-tRNA(Ala) via its editing domain. This is Alanine--tRNA ligase from Clostridioides difficile (strain 630) (Peptoclostridium difficile).